The primary structure comprises 397 residues: Elongation factor Tu (397 aa).

Positions 10–207 (KPHVNVGTIG…TLDTYIPEPV (198 aa)) constitute a tr-type G domain. The G1 stretch occupies residues 19–26 (GHVDHGKT). 19 to 26 (GHVDHGKT) serves as a coordination point for GTP. T26 provides a ligand contact to Mg(2+). The segment at 60 to 64 (GITIN) is G2. Positions 81–84 (DCPG) are G3. Residues 81-85 (DCPGH) and 136-139 (NKAD) contribute to the GTP site. Positions 136-139 (NKAD) are G4. A G5 region spans residues 174–176 (SAL).

The protein belongs to the TRAFAC class translation factor GTPase superfamily. Classic translation factor GTPase family. EF-Tu/EF-1A subfamily. In terms of assembly, monomer.

The protein localises to the cytoplasm. It carries out the reaction GTP + H2O = GDP + phosphate + H(+). Functionally, GTP hydrolase that promotes the GTP-dependent binding of aminoacyl-tRNA to the A-site of ribosomes during protein biosynthesis. The chain is Elongation factor Tu from Ectopseudomonas mendocina (strain ymp) (Pseudomonas mendocina).